Reading from the N-terminus, the 197-residue chain is GTP cyclohydrolase-2 (197 aa).

49–53 (RVHSE) is a binding site for GTP. Residues Cys-54, Cys-65, and Cys-67 each coordinate Zn(2+). GTP is bound by residues Gln-70, 92–94 (EGR), and Thr-114. Residue Asp-126 is the Proton acceptor of the active site. The active-site Nucleophile is Arg-128. The GTP site is built by Thr-149 and Lys-154.

It belongs to the GTP cyclohydrolase II family. As to quaternary structure, homodimer. It depends on Zn(2+) as a cofactor.

It catalyses the reaction GTP + 4 H2O = 2,5-diamino-6-hydroxy-4-(5-phosphoribosylamino)-pyrimidine + formate + 2 phosphate + 3 H(+). Its pathway is cofactor biosynthesis; riboflavin biosynthesis; 5-amino-6-(D-ribitylamino)uracil from GTP: step 1/4. In terms of biological role, catalyzes the conversion of GTP to 2,5-diamino-6-ribosylamino-4(3H)-pyrimidinone 5'-phosphate (DARP), formate and pyrophosphate. The sequence is that of GTP cyclohydrolase-2 from Pectobacterium atrosepticum (strain SCRI 1043 / ATCC BAA-672) (Erwinia carotovora subsp. atroseptica).